The chain runs to 245 residues: Biosynthetic peptidoglycan transglycosylase (245 aa).

The chain crosses the membrane as a helical span at residues 29-49 (IVLAVLIVLILPYALIVFYLL).

This sequence belongs to the glycosyltransferase 51 family.

Its subcellular location is the cell inner membrane. It carries out the reaction [GlcNAc-(1-&gt;4)-Mur2Ac(oyl-L-Ala-gamma-D-Glu-L-Lys-D-Ala-D-Ala)](n)-di-trans,octa-cis-undecaprenyl diphosphate + beta-D-GlcNAc-(1-&gt;4)-Mur2Ac(oyl-L-Ala-gamma-D-Glu-L-Lys-D-Ala-D-Ala)-di-trans,octa-cis-undecaprenyl diphosphate = [GlcNAc-(1-&gt;4)-Mur2Ac(oyl-L-Ala-gamma-D-Glu-L-Lys-D-Ala-D-Ala)](n+1)-di-trans,octa-cis-undecaprenyl diphosphate + di-trans,octa-cis-undecaprenyl diphosphate + H(+). Its pathway is cell wall biogenesis; peptidoglycan biosynthesis. Functionally, peptidoglycan polymerase that catalyzes glycan chain elongation from lipid-linked precursors. The polypeptide is Biosynthetic peptidoglycan transglycosylase (Rhizobium johnstonii (strain DSM 114642 / LMG 32736 / 3841) (Rhizobium leguminosarum bv. viciae)).